Consider the following 114-residue polypeptide: MGALEPSWCLLFLPVLLTVGGLSPVQAQSDTFPRCDCSSVSPGVLAGIVLGDLVLTLLIALAVYSLGRLVSRGQGTAEGTRKQHIAETESPYQELQGQRPEVYSDLNTQRQYYR.

The first 21 residues, methionine 1–glycine 21, serve as a signal peptide directing secretion. Topologically, residues leucine 22–proline 42 are extracellular. A helical membrane pass occupies residues glycine 43–valine 63. Aspartate 52 provides a ligand contact to Ca(2+). The Cytoplasmic segment spans residues tyrosine 64–arginine 114. Residues glutamine 74–asparagine 107 are disordered. One can recognise an ITAM domain in the interval arginine 81–glutamine 109. Phosphotyrosine is present on residues tyrosine 92 and tyrosine 103.

It belongs to the TYROBP family. As to quaternary structure, homodimer; disulfide-linked. Homotrimer; disulfide-linked. Homotetramer; disulfide-linked. Homotrimers and homotetramers form when low levels of partner receptors are available and are competitive with assembly with interacting receptors. They may represent alternative oligomerization states or may be intermediates in the receptor assembly process. Binding of a metal cation aids in homooligomerization through coordination of the metal ion by the subunits of the oligomer. Interacts with TREM1. Interacts with TREM2. Interacts with TREM3. Interacts with CLECSF5. Interacts with CD300LB and CD300C2. Interacts with CD300E. Interacts (via ITAM domain) with SYK (via SH2 domains); activates SYK mediating neutrophil and macrophage integrin-mediated activation. Interacts (via transmembrane domain) with KLRK1 isoform 2 (via transmembrane domain); the interaction is required for KLRK1 NK cell surface expression and NK cell-mediated cytotoxicity. Interacts with KLRC2. Interacts with CD300H. Interacts with KLRD1. Interacts with KLRA4 and KLRA8. Post-translationally, tyrosine phosphorylated. Following ligand binding by associated receptors, tyrosine phosphorylated in the ITAM domain which leads to activation of additional tyrosine kinases and subsequent cell activation. In terms of tissue distribution, expressed on microglia (at protein level). Expressed on oligodendrocytes (at protein level). Expressed on macrophages and osteoclasts. Expressed on dendritic cells in liver, spleen, kidney and lung with highest levels in liver dendritic cells.

Its subcellular location is the cell membrane. Adapter protein which non-covalently associates with activating receptors found on the surface of a variety of immune cells to mediate signaling and cell activation following ligand binding by the receptors. TYROBP is tyrosine-phosphorylated in the ITAM domain following ligand binding by the associated receptors which leads to activation of additional tyrosine kinases and subsequent cell activation. Also has an inhibitory role in some cells. Non-covalently associates with activating receptors of the CD300 family to mediate cell activation. Also mediates cell activation through association with activating receptors of the CD200R family. Required for neutrophil activation mediated by integrin. Required for the activation of myeloid cells mediated by the CLEC5A/MDL1 receptor. Associates with natural killer (NK) cell receptors such as the KLRD1/KLRC2 heterodimer to mediate NK cell activation. Also associates non-covalently with the NK cell receptors KLRA4/LY49D and KLRA8/LY49H which leads to NK cell activation. Associates with TREM1 to mediate activation of neutrophils and monocytes. Associates with TREM2 on monocyte-derived dendritic cells to mediate up-regulation of chemokine receptor CCR7 and dendritic cell maturation and survival. Association with TREM2 mediates cytokine-induced formation of multinucleated giant cells which are formed by the fusion of macrophages. Stabilizes the TREM2 C-terminal fragment (TREM2-CTF) which is produced by TREM2 ectodomain shedding. In microglia, required with TREM2 for phagocytosis of apoptotic neurons. Required with ITGAM/CD11B in microglia to control production of microglial superoxide ions which promote the neuronal apoptosis that occurs during brain development. Promotes pro-inflammatory responses in microglia following nerve injury which accelerates degeneration of injured neurons. Positively regulates the expression of the IRAK3/IRAK-M kinase and IL10 production by liver dendritic cells and inhibits their T cell allostimulatory ability. Negatively regulates B cell proliferation. Required for CSF1-mediated osteoclast cytoskeletal organization. Positively regulates multinucleation during osteoclast development. This Mus musculus (Mouse) protein is TYRO protein tyrosine kinase-binding protein.